A 387-amino-acid chain; its full sequence is Alanine racemase (387 aa).

Lys38 acts as the Proton acceptor; specific for D-alanine in catalysis. An N6-(pyridoxal phosphate)lysine modification is found at Lys38. Arg136 contributes to the substrate binding site. The Proton acceptor; specific for L-alanine role is filled by Tyr267. Met315 is a binding site for substrate.

Belongs to the alanine racemase family. The cofactor is pyridoxal 5'-phosphate.

The enzyme catalyses L-alanine = D-alanine. The protein operates within amino-acid biosynthesis; D-alanine biosynthesis; D-alanine from L-alanine: step 1/1. Functionally, catalyzes the interconversion of L-alanine and D-alanine. May also act on other amino acids. In Clostridium novyi (strain NT), this protein is Alanine racemase (alr).